The following is a 620-amino-acid chain: MDSHTLLQALIYLGSAALIVPIAVRLGLGSVLGYLIAGCIIGPWGLRLVTDAESILHFAEIGVVLMLFVIGLELDPQRLWKLRASVFGGGALQMVVCGGLIGLFCMFLGLRWQVAELIGMTLALSSTAIAMQAMNERNLTVSQVGRSAFAVLLFQDIAAIPLVAMIPLLAASGASTTLGAFALSALKVAGALALVVVLGRYVTRPALRFVARSGLREVFSAVALFLVFGFGLLLEEVGLSMAMGAFLAGVLLASSEYRHALESDIEPFKGLLLGLFFIGVGMSIDFGTLVENPLRILLLLAGFLAIKIVMLWLVARPLGVPAKQRRWFAVLLGQGSEFAFVVFGAAQMADVLEPEWAKALTLAVALSMAATPIFLVLLTRMEKTATGEAREADEIDEEQPRVIVAGFGRFGQIAGRLLLSSGVKMVVLDHDPDHIETLRKFGMKVFYGDATRMDLLESAGAAKAEVLINAIDDPQTNLQLSELVKSHFPHLQIIARARDVDHYIRLRQAGVAMPERETFEGALKSGRQALEALGLGRYEARERADLFRHFNTRMVEEMAKGENDPLSRAAAYKRTSAMLSEIITEDREHLSLIQRHGWQGTAEGKHSGEVADEPEVKPSI.

12 consecutive transmembrane segments (helical) span residues 4–24 (HTLL…PIAV), 26–46 (LGLG…PWGL), 54–74 (SILH…GLEL), 90–110 (GALQ…FLGL), 114–134 (VAEL…MQAM), 149–169 (FAVL…IPLL), 178–198 (LGAF…VVVL), 218–238 (VFSA…EEVG), 270–290 (GLLL…GTLV), 294–314 (LRIL…LWLV), 327–347 (WFAV…GAAQ), and 359–379 (ALTL…VLLT). The RCK N-terminal domain maps to 399 to 518 (QPRVIVAGFG…AGVAMPERET (120 aa)). The tract at residues 599-620 (QGTAEGKHSGEVADEPEVKPSI) is disordered.

It belongs to the monovalent cation:proton antiporter 2 (CPA2) transporter (TC 2.A.37) family. KefC subfamily. Homodimer. Interacts with the regulatory subunit KefF.

It localises to the cell inner membrane. Pore-forming subunit of a potassium efflux system that confers protection against electrophiles. Catalyzes K(+)/H(+) antiport. The protein is Glutathione-regulated potassium-efflux system protein KefC of Salmonella paratyphi B (strain ATCC BAA-1250 / SPB7).